Consider the following 203-residue polypeptide: CCG-binding protein 1 (203 aa).

A disordered region spans residues 156–178 (IPDGLPKSEQELEEEEKSKMPDS). The span at 161–175 (PKSEQELEEEEKSKM) shows a compositional bias: basic and acidic residues.

As to quaternary structure, homotetramer. Interacts with MEE12/CCG, MED7A, MED7B, MED9, AGL49, AGL53, AGL75, AGL80, AGL81, AGL82, AGL103 and NRPB1 (via CTD). Expressed in roots, leaves, stems and flowers. Expressed in the central cell of mature ovules.

The protein localises to the nucleus. It is found in the cytoplasm. Required for the development of the one-cell zygote and endosperm in embryos. Required for micropylar pollen tube guidance, but has no effect on ovule development and gametophytic cell fate specification. May connect transcription factors and the Pol II machinery to regulate pollen tube attraction, via its interactions with AGAMOUS-like (AGL) transcription factors, MEE14/CCG and the Mediator complex. The protein is CCG-binding protein 1 of Arabidopsis thaliana (Mouse-ear cress).